The primary structure comprises 118 residues: Appetite-regulating hormone (118 aa).

The signal sequence occupies residues 1 to 24 (MPSTGTICSLLLLSVLLMADLAMA). S27 is lipidated: O-decanoyl serine; alternate. S27 carries the O-hexanoyl serine; alternate lipid modification. S27 is lipidated: O-octanoyl serine; alternate. The tract at residues 29–50 (LSPEHQKVQQRKESKKPAAKLK) is disordered. The segment covering 32-44 (EHQKVQQRKESKK) has biased composition (basic and acidic residues). The propeptide at 53 to 76 (ALEGWLGPEDSGEVEGTEDKLEIR) is removed in mature form. Leucine amide is present on L99. Positions 100 to 118 (GKFLQDILWEEVTEAPADK) are cleaved as a propeptide — removed in mature form.

It belongs to the motilin family. Post-translationally, O-octanoylated by GOAT/MBOAT4. O-octanoylation is essential for ghrelin activity. Amidation of Leu-99 is essential for obestatin activity.

The protein localises to the secreted. Its function is as follows. Ghrelin is the ligand for growth hormone secretagogue receptor type 1 (GHSR). Induces the release of growth hormone from the pituitary. Has an appetite-stimulating effect, induces adiposity and stimulates gastric acid secretion. Involved in growth regulation. Functionally, obestatin may be the ligand for GPR39. May have an appetite-reducing effect resulting in decreased food intake. May reduce gastric emptying activity and jejunal motility. This Sus scrofa (Pig) protein is Appetite-regulating hormone (GHRL).